The chain runs to 255 residues: 5-oxoprolinase subunit A (255 aa).

The protein belongs to the LamB/PxpA family. As to quaternary structure, forms a complex composed of PxpA, PxpB and PxpC.

The enzyme catalyses 5-oxo-L-proline + ATP + 2 H2O = L-glutamate + ADP + phosphate + H(+). Functionally, catalyzes the cleavage of 5-oxoproline to form L-glutamate coupled to the hydrolysis of ATP to ADP and inorganic phosphate. This chain is 5-oxoprolinase subunit A, found in Pyrococcus horikoshii (strain ATCC 700860 / DSM 12428 / JCM 9974 / NBRC 100139 / OT-3).